The sequence spans 430 residues: Adenylosuccinate synthetase (430 aa).

GTP is bound by residues 12–18 (GDEGKGK) and 40–42 (GHT). Catalysis depends on Asp-13, which acts as the Proton acceptor. Mg(2+) is bound by residues Asp-13 and Gly-40. IMP is bound by residues 13–16 (DEGK), 38–41 (NAGH), Thr-128, Arg-142, Gln-223, Thr-238, and Arg-302. His-41 serves as the catalytic Proton donor. 298–304 (VNTGRTR) is a substrate binding site. Residues Arg-304, 330–332 (KLD), and 412–414 (GVG) contribute to the GTP site.

Belongs to the adenylosuccinate synthetase family. Homodimer. Requires Mg(2+) as cofactor.

The protein resides in the cytoplasm. The enzyme catalyses IMP + L-aspartate + GTP = N(6)-(1,2-dicarboxyethyl)-AMP + GDP + phosphate + 2 H(+). It participates in purine metabolism; AMP biosynthesis via de novo pathway; AMP from IMP: step 1/2. Functionally, plays an important role in the de novo pathway of purine nucleotide biosynthesis. Catalyzes the first committed step in the biosynthesis of AMP from IMP. This Corynebacterium ammoniagenes (Brevibacterium ammoniagenes) protein is Adenylosuccinate synthetase.